A 446-amino-acid chain; its full sequence is Branched-chain amino acid permease BrnQ (446 aa).

12 helical membrane-spanning segments follow: residues I13 to L33, L41 to A61, K81 to P101, M120 to F140, F154 to P174, V196 to I216, T237 to A257, G285 to I305, W325 to I345, F347 to L367, I381 to G401, and G421 to I441.

This sequence belongs to the branched chain amino acid transporter family.

It is found in the cell membrane. Leucine uptake is inhibited by the proton ionophore carbonyl cyanide m-chlorophenylhydrazone (CCCP). Functionally, branched chain amino acid transport system which is involved in the uptake of leucine, valine and isoleucine. The proton motive force is probably the driving force for transport. The sequence is that of Branched-chain amino acid permease BrnQ from Lactobacillus delbrueckii subsp. lactis.